A 156-amino-acid chain; its full sequence is MPRRREVPKREILPDPKFGNVEVAKFMNVLMLDGKKSVAERIVYGAFDHIEKKANKEPLEIFSTAMGNVKPMVEVKSRRVGGANYQVPVEVRPSRRSALAMRWVREAAKKRGEKSMAQRLANELLEAAEGRGGAMKKREEVHRMAEANKAFSHFRF.

Belongs to the universal ribosomal protein uS7 family. As to quaternary structure, part of the 30S ribosomal subunit. Contacts proteins S9 and S11.

One of the primary rRNA binding proteins, it binds directly to 16S rRNA where it nucleates assembly of the head domain of the 30S subunit. Is located at the subunit interface close to the decoding center, probably blocks exit of the E-site tRNA. This Polynucleobacter asymbioticus (strain DSM 18221 / CIP 109841 / QLW-P1DMWA-1) (Polynucleobacter necessarius subsp. asymbioticus) protein is Small ribosomal subunit protein uS7.